The following is a 799-amino-acid chain: Putative mRNA-capping enzyme P5 (799 aa).

Belongs to the phytoreovirus protein P5 family.

Its subcellular location is the virion. The protein localises to the host cytoplasm. The enzyme catalyses a 5'-end diphospho-ribonucleoside in mRNA + GTP + H(+) = a 5'-end (5'-triphosphoguanosine)-ribonucleoside in mRNA + diphosphate. It functions in the pathway mRNA processing; mRNA capping. In terms of biological role, enzyme involved in mRNA capping (Potential). Binds to GTP and might have guanylyltransferase activity. Together with the RNA-directed RNA polymerase P1 and protein P7, forms an transcriptional complex positioned near the channels situated at each of the five-fold vertices of the core. This Nephotettix cincticeps (Green rice leafhopper) protein is Putative mRNA-capping enzyme P5.